A 273-amino-acid polypeptide reads, in one-letter code: Putative phosphoenolpyruvate synthase regulatory protein (273 aa).

Residue 153 to 160 (AVSRAGKT) coordinates ADP.

This sequence belongs to the pyruvate, phosphate/water dikinase regulatory protein family. PSRP subfamily.

The catalysed reaction is [pyruvate, water dikinase] + ADP = [pyruvate, water dikinase]-phosphate + AMP + H(+). The enzyme catalyses [pyruvate, water dikinase]-phosphate + phosphate + H(+) = [pyruvate, water dikinase] + diphosphate. Bifunctional serine/threonine kinase and phosphorylase involved in the regulation of the phosphoenolpyruvate synthase (PEPS) by catalyzing its phosphorylation/dephosphorylation. The sequence is that of Putative phosphoenolpyruvate synthase regulatory protein from Xylella fastidiosa (strain M12).